We begin with the raw amino-acid sequence, 365 residues long: MINLGDKQSTIVVAMSGGVDSSAVAAMLHEQGHNVIGITLQLYDHGMAVGKKNACCAGQDIYDAKMVANKLGIPHYVLDYESKFKESVIDNFVDSYLQGETPLPCVQCNKSVKFRDLIKTARELGAAQLATGHYVRKVNGDNGAELHTGLDPAKDQSYFLFTTTKEQLEYLSFPLGGLTKDETRRLASKFGLEVADKPDSQDICFVPDGNYKSVINKIRPGASESGKIIHVNGFELGEHSGIINYTIGQRRGLGIAYNEPLYVVKIDPKDNIVYVGPESALHVQEFIIKNINWLADEIKDNEKLEVEVKIRSTRPPRLAEISKLDDDKMKVKFLSEEKAVAPGQACVIYAGERVLGGGWITRDIR.

ATP is bound by residues 14–21 and Leu-40; that span reads AMSGGVDS. Cys-108 serves as the catalytic Nucleophile. A disulfide bond links Cys-108 and Cys-204. Gly-132 serves as a coordination point for ATP. The interaction with tRNA stretch occupies residues 154 to 156; the sequence is KDQ. The Cysteine persulfide intermediate role is filled by Cys-204.

The protein belongs to the MnmA/TRMU family.

It localises to the cytoplasm. The enzyme catalyses S-sulfanyl-L-cysteinyl-[protein] + uridine(34) in tRNA + AH2 + ATP = 2-thiouridine(34) in tRNA + L-cysteinyl-[protein] + A + AMP + diphosphate + H(+). Functionally, catalyzes the 2-thiolation of uridine at the wobble position (U34) of tRNA, leading to the formation of s(2)U34. The protein is tRNA-specific 2-thiouridylase MnmA of Rickettsia felis (strain ATCC VR-1525 / URRWXCal2) (Rickettsia azadi).